A 619-amino-acid polypeptide reads, in one-letter code: Chaperone protein HscA homolog (619 aa).

It belongs to the heat shock protein 70 family.

In terms of biological role, chaperone involved in the maturation of iron-sulfur cluster-containing proteins. Has a low intrinsic ATPase activity which is markedly stimulated by HscB. This chain is Chaperone protein HscA homolog, found in Haemophilus influenzae (strain PittGG).